Here is a 389-residue protein sequence, read N- to C-terminus: Putative DNA processing protein DprA (389 aa).

The protein belongs to the DprA/Smf family.

Functionally, may help load RecA onto ssDNA. The chain is Putative DNA processing protein DprA from Mycobacterium tuberculosis (strain CDC 1551 / Oshkosh).